The primary structure comprises 256 residues: Inositol-1-monophosphatase (256 aa).

4 residues coordinate Mg(2+): Glu-60, Asp-77, Leu-79, and Asp-80. Glu-60 serves as a coordination point for substrate. Substrate contacts are provided by residues 79–82 (LDGT), Arg-178, and Asp-207. Asp-207 is a binding site for Mg(2+).

It belongs to the inositol monophosphatase superfamily. Mg(2+) is required as a cofactor.

The catalysed reaction is a myo-inositol phosphate + H2O = myo-inositol + phosphate. The chain is Inositol-1-monophosphatase (suhB) from Caulobacter vibrioides (strain ATCC 19089 / CIP 103742 / CB 15) (Caulobacter crescentus).